Consider the following 208-residue polypeptide: Large ribosomal subunit protein bL25 (208 aa).

This sequence belongs to the bacterial ribosomal protein bL25 family. CTC subfamily. Part of the 50S ribosomal subunit; part of the 5S rRNA/L5/L18/L25 subcomplex. Contacts the 5S rRNA. Binds to the 5S rRNA independently of L5 and L18.

Its function is as follows. This is one of the proteins that binds to the 5S RNA in the ribosome where it forms part of the central protuberance. This is Large ribosomal subunit protein bL25 from Burkholderia thailandensis (strain ATCC 700388 / DSM 13276 / CCUG 48851 / CIP 106301 / E264).